We begin with the raw amino-acid sequence, 393 residues long: NAD(P)H-quinone oxidoreductase subunit H, chloroplastic (393 aa).

Belongs to the complex I 49 kDa subunit family. NDH is composed of at least 16 different subunits, 5 of which are encoded in the nucleus.

The protein localises to the plastid. Its subcellular location is the chloroplast thylakoid membrane. The catalysed reaction is a plastoquinone + NADH + (n+1) H(+)(in) = a plastoquinol + NAD(+) + n H(+)(out). The enzyme catalyses a plastoquinone + NADPH + (n+1) H(+)(in) = a plastoquinol + NADP(+) + n H(+)(out). NDH shuttles electrons from NAD(P)H:plastoquinone, via FMN and iron-sulfur (Fe-S) centers, to quinones in the photosynthetic chain and possibly in a chloroplast respiratory chain. The immediate electron acceptor for the enzyme in this species is believed to be plastoquinone. Couples the redox reaction to proton translocation, and thus conserves the redox energy in a proton gradient. The sequence is that of NAD(P)H-quinone oxidoreductase subunit H, chloroplastic from Solanum tuberosum (Potato).